Consider the following 376-residue polypeptide: Thymidine kinase (376 aa).

The interval Met-1 to Glu-39 is disordered. Residues Ser-19 to Arg-32 show a composition bias toward basic residues. Gly-56–Thr-63 is a binding site for ATP. Glu-83 (proton acceptor) is an active-site residue. Residues Tyr-101 and Gln-125 each contribute to the substrate site. Arg-216 contacts ATP. Arg-222 serves as a coordination point for substrate.

It belongs to the herpesviridae thymidine kinase family. Homodimer.

The catalysed reaction is thymidine + ATP = dTMP + ADP + H(+). Functionally, catalyzes the transfer of the gamma-phospho group of ATP to thymidine to generate dTMP in the salvage pathway of pyrimidine synthesis. The dTMP serves as a substrate for DNA polymerase during viral DNA replication. Allows the virus to be reactivated and to grow in non-proliferative cells lacking a high concentration of phosphorylated nucleic acid precursors. This Human herpesvirus 1 (strain CL101) (HHV-1) protein is Thymidine kinase.